The following is a 312-amino-acid chain: DNA-directed RNA polymerase subunit alpha (312 aa).

Residues Met-1–Thr-229 form an alpha N-terminal domain (alpha-NTD) region. An alpha C-terminal domain (alpha-CTD) region spans residues Ser-241–Ala-312.

This sequence belongs to the RNA polymerase alpha chain family. In terms of assembly, in cyanobacteria the RNAP catalytic core is composed of 2 alpha, 1 beta, 1 beta', 1 gamma and 1 omega subunit. When a sigma factor is associated with the core the holoenzyme is formed, which can initiate transcription.

The catalysed reaction is RNA(n) + a ribonucleoside 5'-triphosphate = RNA(n+1) + diphosphate. In terms of biological role, DNA-dependent RNA polymerase catalyzes the transcription of DNA into RNA using the four ribonucleoside triphosphates as substrates. The chain is DNA-directed RNA polymerase subunit alpha from Synechococcus sp. (strain RCC307).